A 203-amino-acid chain; its full sequence is Putative B3 domain-containing protein At1g50220 (203 aa).

The segment at residues 99–195 (DIVGNVALPK…KFIVLNFQHK (97 aa)) is a DNA-binding region (TF-B3).

It is found in the nucleus. The chain is Putative B3 domain-containing protein At1g50220 from Arabidopsis thaliana (Mouse-ear cress).